The sequence spans 217 residues: Uridine kinase (217 aa).

17–24 (GASASGKS) lines the ATP pocket.

It belongs to the uridine kinase family.

It is found in the cytoplasm. The enzyme catalyses uridine + ATP = UMP + ADP + H(+). It catalyses the reaction cytidine + ATP = CMP + ADP + H(+). Its pathway is pyrimidine metabolism; CTP biosynthesis via salvage pathway; CTP from cytidine: step 1/3. It functions in the pathway pyrimidine metabolism; UMP biosynthesis via salvage pathway; UMP from uridine: step 1/1. This chain is Uridine kinase, found in Haemophilus ducreyi (strain 35000HP / ATCC 700724).